The following is a 363-amino-acid chain: Cyanide hydratase (363 aa).

The CN hydrolase domain occupies 6–285 (YKAACVTSEP…DGLLFVDIDL (280 aa)). The active-site Proton acceptor is glutamate 46. The active site involves lysine 128. Cysteine 163 (nucleophile) is an active-site residue.

This sequence belongs to the carbon-nitrogen hydrolase superfamily. Nitrilase family. Oligomer of dimers, forming left-handed helical fibers.

It carries out the reaction formamide = hydrogen cyanide + H2O. Catalyzes the hydration of cyanide to formamide. Degradation of cyanide may be important for plant pathogenic fungi in infection of cyanogenic plants. The polypeptide is Cyanide hydratase (CyhAB) (Alternaria brassicicola (Dark leaf spot agent)).